The sequence spans 144 residues: Large ribosomal subunit protein uL15 (144 aa).

The interval 1 to 52 (MRLNTISSAPGAKQAEKRVGRGIGSGWGKTCGRGHKGQKSRSGGFHKVGFEG) is disordered. A compositionally biased stretch (gly residues) spans 21–31 (RGIGSGWGKTC).

It belongs to the universal ribosomal protein uL15 family. As to quaternary structure, part of the 50S ribosomal subunit.

Binds to the 23S rRNA. The chain is Large ribosomal subunit protein uL15 from Nitrosococcus oceani (strain ATCC 19707 / BCRC 17464 / JCM 30415 / NCIMB 11848 / C-107).